The chain runs to 513 residues: Maturase K (513 aa).

Belongs to the intron maturase 2 family. MatK subfamily.

The protein resides in the plastid. It is found in the chloroplast. In terms of biological role, usually encoded in the trnK tRNA gene intron. Probably assists in splicing its own and other chloroplast group II introns. The protein is Maturase K of Arundo donax (Giant reed).